The sequence spans 325 residues: MAQMTMIQAITDALRTELKNDENVLVFGEDVGVNGGVFRATEGLQKEFGEDRVFDTPLAESGIGGLALGLGLNGFRPVMEIQFFGFVYEVMDSVSGQMARMRYRSGGRWTSPVTIRSPFGGGVHTPELHADSLEGLVAQQPGIKVVIPSTPYDAKGLLISAIRDNDPVVFLEHMKLYRSFRQEVPEEEYTIELGKADVKREGTDLSIITYGAMVHESLKAADELEKDGISAEVVDLRTVSPLDIDTIIASVEKTGRAIVVQEAQKQAGIAANVVAEINDRAILSLEAPVLRVAAPDTVFPFSQAESVWLPNHKDVLETARKVLEF.

Glutamate 60 provides a ligand contact to thiamine diphosphate.

Heterodimer of an alpha and a beta chain. Thiamine diphosphate is required as a cofactor.

It localises to the cytoplasm. The protein localises to the secreted. It catalyses the reaction N(6)-[(R)-lipoyl]-L-lysyl-[protein] + pyruvate + H(+) = N(6)-[(R)-S(8)-acetyldihydrolipoyl]-L-lysyl-[protein] + CO2. Activity of the E1 module is inhibited by the pyruvate dehydrogenase inhibitor PdhI. Functionally, the pyruvate dehydrogenase complex catalyzes the overall conversion of pyruvate to acetyl-CoA and CO(2). It contains multiple copies of three enzymatic components: pyruvate dehydrogenase (E1), dihydrolipoamide acetyltransferase (E2) and lipoamide dehydrogenase (E3). In terms of biological role, the B.subtilis PDH complex also possesses branched-chain 2-oxoacid dehydrogenase (BCDH) activity. In Bacillus subtilis (strain 168), this protein is Pyruvate dehydrogenase E1 component subunit beta.